The sequence spans 690 residues: Calpain-9 (690 aa).

The interval 1–24 is disordered; that stretch reads MPYLYRAPGPQAHPVPKDARITHS. One can recognise a Calpain catalytic domain in the interval 42–337; sequence LFEDADFPAS…FDKVEICNLT (296 aa). Ca(2+)-binding residues include leucine 81, glycine 83, and aspartate 88. Cysteine 97 is a catalytic residue. Glutamate 167 contacts Ca(2+). Active-site residues include histidine 254 and asparagine 278. Ca(2+)-binding residues include glutamate 284, aspartate 291, leucine 312, aspartate 314, and glutamate 316. Residues 338–521 are domain III; sequence PDALEEDAIH…PPDQETEEEQ (184 aa). The interval 498 to 519 is disordered; that stretch reads GNVDIDLPEPPKPTPPDQETEE. EF-hand domains are found at residues 518–552, 561–589, and 591–626; these read EEEQ…VLQK, LSLI…FKVF, and DKLK…AGFQ. The segment at 522–690 is domain IV; the sequence is RFRALFEQVA…NEFIHLTMNI (169 aa). Ca(2+) contacts are provided by aspartate 574, serine 576, asparagine 578, lysine 580, glutamate 585, aspartate 604, aspartate 606, serine 608, threonine 610, and glutamate 615.

This sequence belongs to the peptidase C2 family. In terms of tissue distribution, expressed predominantly in stomach.

Its function is as follows. Calcium-regulated non-lysosomal thiol-protease. This is Calpain-9 (CAPN9) from Homo sapiens (Human).